The chain runs to 153 residues: MSRVTAIISALIICIIVSLSWAVNHYRDNAIAYKVQRDKNARELKLANAAITDMQMRQRDVAALDAKYTKELADAKAENDALRDDVAAGRRRLHIKAVCQSVREATTASGVDNAASPRLADTAERDYFTLRERLITMQKQLEGTQKYINEQCR.

Necessary for host cell lysis. It is believed to code for an endopeptidase that cleaves the amino-carboxyl cross-link between the diaminopimelic acid and D-alanine residues in the murein component of the bacterial cell wall. This Escherichia coli (strain K12) protein is Prophage Rz endopeptidase RzpD (rzpD).